The chain runs to 503 residues: ATP synthase subunit alpha (503 aa).

169-176 (GDRGTGKT) serves as a coordination point for ATP.

Belongs to the ATPase alpha/beta chains family. In terms of assembly, F-type ATPases have 2 components, CF(1) - the catalytic core - and CF(0) - the membrane proton channel. CF(1) has five subunits: alpha(3), beta(3), gamma(1), delta(1), epsilon(1). CF(0) has three main subunits: a(1), b(2) and c(9-12). The alpha and beta chains form an alternating ring which encloses part of the gamma chain. CF(1) is attached to CF(0) by a central stalk formed by the gamma and epsilon chains, while a peripheral stalk is formed by the delta and b chains.

It is found in the cell inner membrane. It carries out the reaction ATP + H2O + 4 H(+)(in) = ADP + phosphate + 5 H(+)(out). Functionally, produces ATP from ADP in the presence of a proton gradient across the membrane. The alpha chain is a regulatory subunit. This Leptospira borgpetersenii serovar Hardjo-bovis (strain L550) protein is ATP synthase subunit alpha.